Here is a 673-residue protein sequence, read N- to C-terminus: Exoribonuclease 2 (673 aa).

The 326-residue stretch at 191–516 folds into the RNB domain; the sequence is RTDLTATPFF…NHRLLKAVIA (326 aa). Positions 562 to 645 constitute an S1 motif domain; sequence DKVFNAEIID…ETRSLIAKPA (84 aa). A disordered region spans residues 650 to 673; it reads PGPAPVAPTSEADATPADEAPKAE.

This sequence belongs to the RNR ribonuclease family. RNase II subfamily.

The protein localises to the cytoplasm. It catalyses the reaction Exonucleolytic cleavage in the 3'- to 5'-direction to yield nucleoside 5'-phosphates.. Its function is as follows. Involved in mRNA degradation. Hydrolyzes single-stranded polyribonucleotides processively in the 3' to 5' direction. This chain is Exoribonuclease 2, found in Aeromonas hydrophila subsp. hydrophila (strain ATCC 7966 / DSM 30187 / BCRC 13018 / CCUG 14551 / JCM 1027 / KCTC 2358 / NCIMB 9240 / NCTC 8049).